A 124-amino-acid polypeptide reads, in one-letter code: Period circadian protein (124 aa).

Residues 30 to 124 (TAPVELDPPK…TVTLTESLLN (95 aa)) form a disordered region. Low complexity predominate over residues 71 to 96 (SGNFTTGSNVRMSSVTNTSNAGTGTS). Residues 97-107 (SAGGNGNGGSG) are compositionally biased toward gly residues.

Forms a heterodimer with timeless (TIM); the complex then translocates into the nucleus. Phosphorylated with a circadian rhythmicity, probably by the double-time protein (dbt). Phosphorylation could be implicated in the stability of per monomer and in the formation of heterodimer per-tim.

It is found in the nucleus. It localises to the cytoplasm. The protein resides in the perinuclear region. Its function is as follows. Essential for biological clock functions. Determines the period length of circadian and ultradian rhythms; an increase in PER dosage leads to shortened circadian rhythms and a decrease leads to lengthened circadian rhythms. Essential for the circadian rhythmicity of locomotor activity, eclosion behavior, and for the rhythmic component of the male courtship song that originates in the thoracic nervous system. The biological cycle depends on the rhythmic formation and nuclear localization of the TIM-PER complex. Light induces the degradation of TIM, which promotes elimination of PER. Nuclear activity of the heterodimer coordinatively regulates PER and TIM transcription through a negative feedback loop. Behaves as a negative element in circadian transcriptional loop. Does not appear to bind DNA, suggesting indirect transcriptional inhibition. The sequence is that of Period circadian protein (per) from Hirtodrosophila pictiventris (Fruit fly).